A 294-amino-acid polypeptide reads, in one-letter code: N-acetylmuramic acid 6-phosphate etherase (294 aa).

The SIS domain occupies 56–219 (TSYSLRNGGR…STLSMVSVGK (164 aa)). Glutamate 84 serves as the catalytic Proton donor. Glutamate 115 is a catalytic residue.

This sequence belongs to the GCKR-like family. MurNAc-6-P etherase subfamily. As to quaternary structure, homodimer.

It catalyses the reaction N-acetyl-D-muramate 6-phosphate + H2O = N-acetyl-D-glucosamine 6-phosphate + (R)-lactate. It functions in the pathway amino-sugar metabolism; 1,6-anhydro-N-acetylmuramate degradation. Its pathway is amino-sugar metabolism; N-acetylmuramate degradation. It participates in cell wall biogenesis; peptidoglycan recycling. In terms of biological role, specifically catalyzes the cleavage of the D-lactyl ether substituent of MurNAc 6-phosphate, producing GlcNAc 6-phosphate and D-lactate. Together with AnmK, is also required for the utilization of anhydro-N-acetylmuramic acid (anhMurNAc) either imported from the medium or derived from its own cell wall murein, and thus plays a role in cell wall recycling. The sequence is that of N-acetylmuramic acid 6-phosphate etherase from Francisella tularensis subsp. tularensis (strain SCHU S4 / Schu 4).